Reading from the N-terminus, the 149-residue chain is Large ribosomal subunit protein uL22 (149 aa).

This sequence belongs to the universal ribosomal protein uL22 family. As to quaternary structure, part of the 50S ribosomal subunit.

In terms of biological role, this protein binds specifically to 23S rRNA. It makes multiple contacts with different domains of the 23S rRNA in the assembled 50S subunit and ribosome. The globular domain of the protein is located near the polypeptide exit tunnel on the outside of the subunit, while an extended beta-hairpin is found that lines the wall of the exit tunnel in the center of the 70S ribosome. In Picrophilus torridus (strain ATCC 700027 / DSM 9790 / JCM 10055 / NBRC 100828 / KAW 2/3), this protein is Large ribosomal subunit protein uL22.